A 140-amino-acid polypeptide reads, in one-letter code: MCNRLVTVTGVAMVVAAGLSACGQAQTVPRKAARLTIDGVTHTTRPATCSQEHSYRTIDIRNHDSTVQAVVLLSGDRVIPQWVKIRNVDGFNGSFWHGGVGNARADRARNTYTVAGSAYGISSKKPNTVVSTDFNILAEC.

Positions 1–21 are cleaved as a signal peptide; sequence MCNRLVTVTGVAMVVAAGLSA. Cys22 is lipidated: N-palmitoyl cysteine. Residue Cys22 is the site of S-diacylglycerol cysteine attachment.

The protein belongs to the mycobacterial 19 kDa antigen family.

Its subcellular location is the cell membrane. The sequence is that of Probable lipoprotein LppE (lppE) from Mycobacterium tuberculosis (strain ATCC 25618 / H37Rv).